The following is a 145-amino-acid chain: D-aminoacyl-tRNA deacylase (145 aa).

Residues 137 to 138 carry the Gly-cisPro motif, important for rejection of L-amino acids motif; the sequence is GP.

This sequence belongs to the DTD family. As to quaternary structure, homodimer.

It is found in the cytoplasm. It catalyses the reaction glycyl-tRNA(Ala) + H2O = tRNA(Ala) + glycine + H(+). It carries out the reaction a D-aminoacyl-tRNA + H2O = a tRNA + a D-alpha-amino acid + H(+). Functionally, an aminoacyl-tRNA editing enzyme that deacylates mischarged D-aminoacyl-tRNAs. Also deacylates mischarged glycyl-tRNA(Ala), protecting cells against glycine mischarging by AlaRS. Acts via tRNA-based rather than protein-based catalysis; rejects L-amino acids rather than detecting D-amino acids in the active site. By recycling D-aminoacyl-tRNA to D-amino acids and free tRNA molecules, this enzyme counteracts the toxicity associated with the formation of D-aminoacyl-tRNA entities in vivo and helps enforce protein L-homochirality. This Shewanella woodyi (strain ATCC 51908 / MS32) protein is D-aminoacyl-tRNA deacylase.